We begin with the raw amino-acid sequence, 316 residues long: Glutathione synthetase (316 aa).

One can recognise an ATP-grasp domain in the interval 124–311; the sequence is NEKLAALLFP…IAGLLFDAIE (188 aa). 151 to 208 contacts ATP; the sequence is FVLAHGQAVLKPLDGMGGRSIFRSGTGDPNLNVILETLTDGGRKLTLAQRFIPDITAG. Mg(2+) contacts are provided by glutamate 282 and asparagine 284.

The protein belongs to the prokaryotic GSH synthase family. The cofactor is Mg(2+). It depends on Mn(2+) as a cofactor.

It catalyses the reaction gamma-L-glutamyl-L-cysteine + glycine + ATP = glutathione + ADP + phosphate + H(+). Its pathway is sulfur metabolism; glutathione biosynthesis; glutathione from L-cysteine and L-glutamate: step 2/2. This Xanthomonas campestris pv. campestris (strain ATCC 33913 / DSM 3586 / NCPPB 528 / LMG 568 / P 25) protein is Glutathione synthetase.